Consider the following 424-residue polypeptide: UPF0229 protein PC1_1960 (424 aa).

Residues 46-109 (IESGESVSIP…GQGDASKDGE (64 aa)) form a disordered region. Basic and acidic residues predominate over residues 77-90 (PGNDHFVQNDKIER). Positions 92-101 (QGGGGGGSGQ) are enriched in gly residues.

This sequence belongs to the UPF0229 family.

The sequence is that of UPF0229 protein PC1_1960 from Pectobacterium carotovorum subsp. carotovorum (strain PC1).